The following is a 591-amino-acid chain: Probable catabolite repression protein creC (591 aa).

4 WD repeats span residues 249–289, 330–371, 372–411, and 414–458; these read VNNS…ALFA, LANQ…DIFR, SYYG…IVAR, and GHNS…LHRP. Residues 477-510 are disordered; the sequence is QHLNRHRADSGGNRTRSDSQETADTYNSYDPTVR. Residues 496–506 show a composition bias toward polar residues; the sequence is QETADTYNSYD. Residues 530-567 form a WD 5 repeat; that stretch reads VGEDPICWLGFQEDSIMTSSLEGHIRTWDRPREGINDN.

This sequence belongs to the WD repeat creC family. Interacts with creB.

In terms of biological role, component of the regulatory network controlling carbon source utilization through ubiquitination and deubiquitination involving creA, creB, creC, creD and acrB. Required to prevent the proteolysis of the CreB deubiquitinating enzyme in the absence of carbon catabolite repression. CreB deubiquitinating enzyme stabilized in a complex with the CreC leads to the expression of genes such as those in the proline and quinate pathways. The protein is Probable catabolite repression protein creC (creC) of Aspergillus niger (strain ATCC MYA-4892 / CBS 513.88 / FGSC A1513).